A 359-amino-acid chain; its full sequence is Flavonoid 8-O-methyltransferase 1 (359 aa).

Asp-223 contributes to the S-adenosyl-L-methionine binding site. His-261 serves as the catalytic Proton acceptor.

It belongs to the class I-like SAM-binding methyltransferase superfamily. Cation-independent O-methyltransferase family. In terms of tissue distribution, expressed in leaves and trichomes, especially in cv. SD and cv. EMX-1, but barely in cv. MC and cv. SW.

The enzyme catalyses an 8-hydroxyflavone + S-adenosyl-L-methionine = an 8-methoxyflavone + S-adenosyl-L-homocysteine + H(+). It catalyses the reaction 4',7,8-trihydroxyflavone + S-adenosyl-L-methionine = 4',7-dihydroxy-8-methoxyflavone + S-adenosyl-L-homocysteine + H(+). The catalysed reaction is 7,8-dihydroxyflavone + S-adenosyl-L-methionine = 7-hydroxy-8-methoxyflavone + S-adenosyl-L-homocysteine + H(+). It carries out the reaction 3',4',7,8-tetrahydroxyflavone + S-adenosyl-L-methionine = 3',4,7-trihydroxy-8-methoxyflavone + S-adenosyl-L-homocysteine + H(+). It participates in flavonoid metabolism. Strongly inhibited by gardenin B (GARD B). Functionally, cation-independent flavonoid 8-O-methyltransferase involved in the biosynthesis of polymethoxylated flavonoids natural products such as nevadensin and salvigenin, aroma compounds which contribute to the flavor of sweet basil, and exhibit pharmacological activities such as anti-allergic, anti-oxidant, antibacterial, anti-proliferative, and anti-inflammatory effects. Catalyzes S-adenosylmethionine-dependent regioselective 8-O-methylation of flavonoids; mediates likely the conversion of pilosin (PIL) to nevadensin (NEV) and of 8-hydroxysalvigenin (8-OH-SALV) to gardenin B (GARD B). Can also use 3',4',7,8-tetrahydroxyflavone as substrate. Accepts other unnatural O-diphenols including 7,8,4'-trihydroxy-flavone and 7-O-methyl-8-hydroxy-flavone, and, with a lower efficiency, 7,8-dihydroxy-flavone, as substrates. This Ocimum basilicum (Sweet basil) protein is Flavonoid 8-O-methyltransferase 1.